The primary structure comprises 250 residues: Large ribosomal subunit protein uL29m (250 aa).

N6-acetyllysine is present on lysine 144.

It belongs to the universal ribosomal protein uL29 family. As to quaternary structure, component of the mitochondrial large ribosomal subunit (mt-LSU). Mature mammalian 55S mitochondrial ribosomes consist of a small (28S) and a large (39S) subunit. The 28S small subunit contains a 12S ribosomal RNA (12S mt-rRNA) and 30 different proteins. The 39S large subunit contains a 16S rRNA (16S mt-rRNA), a copy of mitochondrial valine transfer RNA (mt-tRNA(Val)), which plays an integral structural role, and 52 different proteins.

The protein resides in the mitochondrion. In Homo sapiens (Human), this protein is Large ribosomal subunit protein uL29m (MRPL47).